A 248-amino-acid polypeptide reads, in one-letter code: MRTPIIAGNWKMNNTISESLKLIEELKPLVKDAKAEVVVAPTAVSLETVVNATKGSNIKVAAQNAHFEESGAFTGEISLKALEELGVSYVILGHSERRQYFNETDCALNKKVKAAFAHNITPILCCGETLEEREANVTNEVTGKQIKLDLAGLSAEQAAKVVIAYEPIWAIGTGKTATDEQANETIGAIRKTVEVMFGKEVAEKVRIQYGGSVKPNTIKAQMAKPEIDGALVGGASLKAADFAAIVNF.

9-11 (NWK) is a substrate binding site. The active-site Electrophile is histidine 94. Glutamate 166 (proton acceptor) is an active-site residue. Residues glycine 172, serine 212, and 233–234 (GG) contribute to the substrate site.

It belongs to the triosephosphate isomerase family. In terms of assembly, homodimer.

The protein localises to the cytoplasm. It carries out the reaction D-glyceraldehyde 3-phosphate = dihydroxyacetone phosphate. It participates in carbohydrate biosynthesis; gluconeogenesis. It functions in the pathway carbohydrate degradation; glycolysis; D-glyceraldehyde 3-phosphate from glycerone phosphate: step 1/1. Involved in the gluconeogenesis. Catalyzes stereospecifically the conversion of dihydroxyacetone phosphate (DHAP) to D-glyceraldehyde-3-phosphate (G3P). This Clostridium acetobutylicum (strain ATCC 824 / DSM 792 / JCM 1419 / IAM 19013 / LMG 5710 / NBRC 13948 / NRRL B-527 / VKM B-1787 / 2291 / W) protein is Triosephosphate isomerase.